The primary structure comprises 439 residues: 3-phosphoshikimate 1-carboxyvinyltransferase (439 aa).

3-phosphoshikimate-binding residues include Lys-21, Ser-22, and Arg-26. Phosphoenolpyruvate is bound at residue Lys-21. Gly-94 and Arg-122 together coordinate phosphoenolpyruvate. Positions 167, 169, 320, and 347 each coordinate 3-phosphoshikimate. Phosphoenolpyruvate is bound at residue Gln-169. Asp-320 serves as the catalytic Proton acceptor. Phosphoenolpyruvate contacts are provided by Arg-351 and Arg-395.

This sequence belongs to the EPSP synthase family. In terms of assembly, monomer.

The protein resides in the cytoplasm. It carries out the reaction 3-phosphoshikimate + phosphoenolpyruvate = 5-O-(1-carboxyvinyl)-3-phosphoshikimate + phosphate. The protein operates within metabolic intermediate biosynthesis; chorismate biosynthesis; chorismate from D-erythrose 4-phosphate and phosphoenolpyruvate: step 6/7. Catalyzes the transfer of the enolpyruvyl moiety of phosphoenolpyruvate (PEP) to the 5-hydroxyl of shikimate-3-phosphate (S3P) to produce enolpyruvyl shikimate-3-phosphate and inorganic phosphate. The chain is 3-phosphoshikimate 1-carboxyvinyltransferase from Hyphomonas neptunium (strain ATCC 15444).